The following is a 258-amino-acid chain: Imidazole glycerol phosphate synthase subunit HisF (258 aa).

Residues Asp-11 and Asp-130 contribute to the active site.

Belongs to the HisA/HisF family. In terms of assembly, heterodimer of HisH and HisF.

The protein localises to the cytoplasm. It carries out the reaction 5-[(5-phospho-1-deoxy-D-ribulos-1-ylimino)methylamino]-1-(5-phospho-beta-D-ribosyl)imidazole-4-carboxamide + L-glutamine = D-erythro-1-(imidazol-4-yl)glycerol 3-phosphate + 5-amino-1-(5-phospho-beta-D-ribosyl)imidazole-4-carboxamide + L-glutamate + H(+). It participates in amino-acid biosynthesis; L-histidine biosynthesis; L-histidine from 5-phospho-alpha-D-ribose 1-diphosphate: step 5/9. Its function is as follows. IGPS catalyzes the conversion of PRFAR and glutamine to IGP, AICAR and glutamate. The HisF subunit catalyzes the cyclization activity that produces IGP and AICAR from PRFAR using the ammonia provided by the HisH subunit. The chain is Imidazole glycerol phosphate synthase subunit HisF from Citrobacter koseri (strain ATCC BAA-895 / CDC 4225-83 / SGSC4696).